A 316-amino-acid chain; its full sequence is Thymidylate synthase (316 aa).

Residues Arg-23 and 178 to 179 each bind dUMP; that span reads RR. The active-site Nucleophile is the Cys-198. DUMP is bound by residues 218–221, Asn-229, and 259–261; these read RSAD and HLY. Asp-221 is a binding site for (6R)-5,10-methylene-5,6,7,8-tetrahydrofolate. Residue Ala-315 coordinates (6R)-5,10-methylene-5,6,7,8-tetrahydrofolate.

The protein belongs to the thymidylate synthase family. Bacterial-type ThyA subfamily. As to quaternary structure, homodimer.

The protein localises to the cytoplasm. It catalyses the reaction dUMP + (6R)-5,10-methylene-5,6,7,8-tetrahydrofolate = 7,8-dihydrofolate + dTMP. It participates in pyrimidine metabolism; dTTP biosynthesis. In terms of biological role, catalyzes the reductive methylation of 2'-deoxyuridine-5'-monophosphate (dUMP) to 2'-deoxythymidine-5'-monophosphate (dTMP) while utilizing 5,10-methylenetetrahydrofolate (mTHF) as the methyl donor and reductant in the reaction, yielding dihydrofolate (DHF) as a by-product. This enzymatic reaction provides an intracellular de novo source of dTMP, an essential precursor for DNA biosynthesis. The chain is Thymidylate synthase from Lacticaseibacillus casei (Lactobacillus casei).